The following is a 215-amino-acid chain: dITP/XTP pyrophosphatase (215 aa).

13–18 (THNIGK) is a binding site for substrate. Residue aspartate 74 is the Proton acceptor of the active site. Position 74 (aspartate 74) interacts with Mg(2+). Residues serine 75, 163-166 (FGFD), lysine 186, and 199-200 (HR) each bind substrate.

This sequence belongs to the HAM1 NTPase family. As to quaternary structure, homodimer. Mg(2+) serves as cofactor.

The catalysed reaction is XTP + H2O = XMP + diphosphate + H(+). It catalyses the reaction dITP + H2O = dIMP + diphosphate + H(+). The enzyme catalyses ITP + H2O = IMP + diphosphate + H(+). Its function is as follows. Pyrophosphatase that catalyzes the hydrolysis of nucleoside triphosphates to their monophosphate derivatives, with a high preference for the non-canonical purine nucleotides XTP (xanthosine triphosphate), dITP (deoxyinosine triphosphate) and ITP. Seems to function as a house-cleaning enzyme that removes non-canonical purine nucleotides from the nucleotide pool, thus preventing their incorporation into DNA/RNA and avoiding chromosomal lesions. The polypeptide is dITP/XTP pyrophosphatase (Bartonella henselae (strain ATCC 49882 / DSM 28221 / CCUG 30454 / Houston 1) (Rochalimaea henselae)).